The sequence spans 92 residues: Small ribosomal subunit protein uS19 (92 aa).

This sequence belongs to the universal ribosomal protein uS19 family.

Its function is as follows. Protein S19 forms a complex with S13 that binds strongly to the 16S ribosomal RNA. This is Small ribosomal subunit protein uS19 from Klebsiella pneumoniae (strain 342).